The following is a 291-amino-acid chain: Quinol oxidase subunit 2 (291 aa).

The first 28 residues, 1 to 28 (MQLKKAFWKLASLLPXSLLLFLGGCDKK), serve as a signal peptide directing secretion. 2 helical membrane passes run 49–69 (SFLLMSLIIAIVFILFTVILI) and 91–111 (LEIIWTLVPVIIVIALSIPTV).

This sequence belongs to the cytochrome c oxidase subunit 2 family.

The protein localises to the cell membrane. The enzyme catalyses 2 a quinol + O2 = 2 a quinone + 2 H2O. In terms of biological role, catalyzes quinol oxidation with the concomitant reduction of oxygen to water. Subunit II transfers the electrons from a quinol to the binuclear center of the catalytic subunit I. In Bacillus cereus (strain ATCC 10987 / NRS 248), this protein is Quinol oxidase subunit 2.